Here is a 793-residue protein sequence, read N- to C-terminus: Xaa-Pro dipeptidyl-peptidase (793 aa).

Catalysis depends on charge relay system residues Ser363, Asp483, and His514.

The protein belongs to the peptidase S15 family. As to quaternary structure, homodimer.

Its subcellular location is the cytoplasm. The catalysed reaction is Hydrolyzes Xaa-Pro-|- bonds to release unblocked, N-terminal dipeptides from substrates including Ala-Pro-|-p-nitroanilide and (sequentially) Tyr-Pro-|-Phe-Pro-|-Gly-Pro-|-Ile.. Its function is as follows. Removes N-terminal dipeptides sequentially from polypeptides having unsubstituted N-termini provided that the penultimate residue is proline. This chain is Xaa-Pro dipeptidyl-peptidase, found in Lactobacillus helveticus (strain DPC 4571).